The primary structure comprises 191 residues: Dephospho-CoA kinase (191 aa).

The DPCK domain occupies 3-191 (AIGITGSYAS…KLIKDLECRV (189 aa)). 11-16 (ASGKTF) contributes to the ATP binding site.

The protein belongs to the CoaE family.

The protein resides in the cytoplasm. The enzyme catalyses 3'-dephospho-CoA + ATP = ADP + CoA + H(+). The protein operates within cofactor biosynthesis; coenzyme A biosynthesis; CoA from (R)-pantothenate: step 5/5. In terms of biological role, catalyzes the phosphorylation of the 3'-hydroxyl group of dephosphocoenzyme A to form coenzyme A. This chain is Dephospho-CoA kinase, found in Rickettsia prowazekii (strain Madrid E).